Consider the following 418-residue polypeptide: Serine hydroxymethyltransferase (418 aa).

Residues leucine 121 and 125 to 127 each bind (6S)-5,6,7,8-tetrahydrofolate; that span reads GHL. An N6-(pyridoxal phosphate)lysine modification is found at lysine 230. 355 to 357 contacts (6S)-5,6,7,8-tetrahydrofolate; the sequence is SPF.

The protein belongs to the SHMT family. As to quaternary structure, homodimer. Pyridoxal 5'-phosphate is required as a cofactor.

It is found in the cytoplasm. It catalyses the reaction (6R)-5,10-methylene-5,6,7,8-tetrahydrofolate + glycine + H2O = (6S)-5,6,7,8-tetrahydrofolate + L-serine. Its pathway is one-carbon metabolism; tetrahydrofolate interconversion. The protein operates within amino-acid biosynthesis; glycine biosynthesis; glycine from L-serine: step 1/1. Its function is as follows. Catalyzes the reversible interconversion of serine and glycine with tetrahydrofolate (THF) serving as the one-carbon carrier. This reaction serves as the major source of one-carbon groups required for the biosynthesis of purines, thymidylate, methionine, and other important biomolecules. Also exhibits THF-independent aldolase activity toward beta-hydroxyamino acids, producing glycine and aldehydes, via a retro-aldol mechanism. The protein is Serine hydroxymethyltransferase of Streptococcus agalactiae serotype V (strain ATCC BAA-611 / 2603 V/R).